The sequence spans 101 residues: MSDSEVNQEAKPEVKPEVKPETHINLKVSDGSSEIFFKIKKTTPLRRLMEAFAKRQGKEMDSLRFLYDGIRIQADQTPEDLDMEDNDIIEAHREQIGGATY.

The residue at position 2 (serine 2) is an N-acetylserine. Phosphoserine occurs at positions 2 and 4. One can recognise a Ubiquitin-like domain in the interval 22–98; sequence THINLKVSDG…IEAHREQIGG (77 aa). Residue glycine 98 forms a Glycyl lysine isopeptide (Gly-Lys) (interchain with K-? in acceptor proteins) linkage. Residues 99–101 constitute a propeptide that is removed on maturation; the sequence is ATY.

The protein belongs to the ubiquitin family. SUMO subfamily. As to quaternary structure, activated by a E1 ligase composed of AOS1 and UBA2.

In terms of biological role, not known; suppressor of MIF2 mutations. This Saccharomyces cerevisiae (strain ATCC 204508 / S288c) (Baker's yeast) protein is Ubiquitin-like protein SMT3 (SMT3).